Reading from the N-terminus, the 101-residue chain is Small ribosomal subunit protein uS14 (101 aa).

A compositionally biased stretch (basic and acidic residues) spans 1–10 (MAKKSSIEKN). Residues 1 to 24 (MAKKSSIEKNNRRKRLTKNAAPKR) form a disordered region. The span at 11–24 (NRRKRLTKNAAPKR) shows a compositional bias: basic residues.

The protein belongs to the universal ribosomal protein uS14 family. In terms of assembly, part of the 30S ribosomal subunit. Contacts proteins S3 and S10.

Its function is as follows. Binds 16S rRNA, required for the assembly of 30S particles and may also be responsible for determining the conformation of the 16S rRNA at the A site. The sequence is that of Small ribosomal subunit protein uS14 from Rhodopseudomonas palustris (strain BisB18).